We begin with the raw amino-acid sequence, 177 residues long: Adenine phosphoribosyltransferase (177 aa).

This sequence belongs to the purine/pyrimidine phosphoribosyltransferase family. Homodimer.

Its subcellular location is the cytoplasm. It catalyses the reaction AMP + diphosphate = 5-phospho-alpha-D-ribose 1-diphosphate + adenine. Its pathway is purine metabolism; AMP biosynthesis via salvage pathway; AMP from adenine: step 1/1. Functionally, catalyzes a salvage reaction resulting in the formation of AMP, that is energically less costly than de novo synthesis. In Cutibacterium acnes (strain DSM 16379 / KPA171202) (Propionibacterium acnes), this protein is Adenine phosphoribosyltransferase.